The sequence spans 188 residues: Peptide deformylase (188 aa).

Cysteine 94 and histidine 136 together coordinate Fe cation. Residue glutamate 137 is part of the active site. Histidine 140 is a Fe cation binding site.

It belongs to the polypeptide deformylase family. The cofactor is Fe(2+).

It catalyses the reaction N-terminal N-formyl-L-methionyl-[peptide] + H2O = N-terminal L-methionyl-[peptide] + formate. Its function is as follows. Removes the formyl group from the N-terminal Met of newly synthesized proteins. Requires at least a dipeptide for an efficient rate of reaction. N-terminal L-methionine is a prerequisite for activity but the enzyme has broad specificity at other positions. This Pelodictyon phaeoclathratiforme (strain DSM 5477 / BU-1) protein is Peptide deformylase.